The following is a 258-amino-acid chain: MASAAAATTEKGSPVVVGLLVMGNIIILLSGLALFAETVWVTADQYRIYPLMGVSGKDDVFAGAWIAIFCGFSFFVVASFGVGAALCRRRSMILTYLILMLIIYIFECASCITSYTHRDYMVSNPSLITKQMLTFYSADSNQGRELTRLWDRIMIEQECCGTSGPMDWVNFTSAFRATTPEVVFPWPPLCCRRTGNFIPVNEEGCRLGHLDYLFTKGCFEHIGHAIDSYTWGISWFGFAILMWTLPVMLIAMYFYTTL.

Topologically, residues 1 to 14 (MASAAAATTEKGSP) are cytoplasmic. The helical transmembrane segment at 15–35 (VVVGLLVMGNIIILLSGLALF) threads the bilayer. The Extracellular segment spans residues 36 to 59 (AETVWVTADQYRIYPLMGVSGKDD). Residues 60–86 (VFAGAWIAIFCGFSFFVVASFGVGAAL) form a helical membrane-spanning segment. Residues 87 to 91 (CRRRS) lie on the Cytoplasmic side of the membrane. A helical membrane pass occupies residues 92–112 (MILTYLILMLIIYIFECASCI). The Extracellular segment spans residues 113 to 230 (TSYTHRDYMV…HIGHAIDSYT (118 aa)). N-linked (GlcNAc...) asparagine glycosylation occurs at Asn-170. The helical transmembrane segment at 231 to 252 (WGISWFGFAILMWTLPVMLIAM) threads the bilayer. At 253 to 258 (YFYTTL) the chain is on the cytoplasmic side.

It belongs to the tetraspanin (TM4SF) family. Homodimer; disulfide-linked. Interacts with uroplakin-2 (UPK2). In terms of processing, the N-terminus is blocked. Post-translationally, N-glycosylated with high-mannose oligosaccharides. As to expression, bladder epithelium.

The protein resides in the membrane. Component of the asymmetric unit membrane (AUM); a highly specialized biomembrane elaborated by terminally differentiated urothelial cells. May play an important role in normal bladder epithelial physiology, possibly in regulating membrane permeability of superficial umbrella cells or in stabilizing the apical membrane through AUM/cytoskeletal interactions. This Bos taurus (Bovine) protein is Uroplakin-1a (UPK1A).